Here is a 236-residue protein sequence, read N- to C-terminus: UPF0257 lipoprotein YnfC (236 aa).

The first 16 residues, 1-16 (MKYKLLPCLLAIFLTG), serve as a signal peptide directing secretion. Cysteine 17 carries the N-palmitoyl cysteine lipid modification. Cysteine 17 is lipidated: S-diacylglycerol cysteine.

Belongs to the UPF0257 family.

It is found in the cell membrane. The polypeptide is UPF0257 lipoprotein YnfC (Escherichia coli O7:K1 (strain IAI39 / ExPEC)).